Here is a 277-residue protein sequence, read N- to C-terminus: NAD kinase (277 aa).

The active-site Proton acceptor is the Asp67. Residues 67-68, Arg72, 137-138, Lys148, Arg165, Asp167, 178-183, Leu202, and Gln236 contribute to the NAD(+) site; these read DG, NE, and TGYAMS.

This sequence belongs to the NAD kinase family. A divalent metal cation serves as cofactor.

The protein resides in the cytoplasm. The catalysed reaction is NAD(+) + ATP = ADP + NADP(+) + H(+). In terms of biological role, involved in the regulation of the intracellular balance of NAD and NADP, and is a key enzyme in the biosynthesis of NADP. Catalyzes specifically the phosphorylation on 2'-hydroxyl of the adenosine moiety of NAD to yield NADP. The protein is NAD kinase of Pyrococcus abyssi (strain GE5 / Orsay).